The primary structure comprises 123 residues: Large ribosomal subunit protein uL18 (123 aa).

It belongs to the universal ribosomal protein uL18 family. In terms of assembly, part of the 50S ribosomal subunit; part of the 5S rRNA/L5/L18/L25 subcomplex. Contacts the 5S and 23S rRNAs.

Functionally, this is one of the proteins that bind and probably mediate the attachment of the 5S RNA into the large ribosomal subunit, where it forms part of the central protuberance. The sequence is that of Large ribosomal subunit protein uL18 from Bifidobacterium animalis subsp. lactis (strain AD011).